The sequence spans 247 residues: Carboxy-S-adenosyl-L-methionine synthase (247 aa).

S-adenosyl-L-methionine is bound by residues Tyr40, Gly65–Ser67, Asp90–Asn91, Asp122–Ile123, Asn137, and Arg204.

Belongs to the class I-like SAM-binding methyltransferase superfamily. Cx-SAM synthase family. As to quaternary structure, homodimer.

The catalysed reaction is prephenate + S-adenosyl-L-methionine = carboxy-S-adenosyl-L-methionine + 3-phenylpyruvate + H2O. Its function is as follows. Catalyzes the conversion of S-adenosyl-L-methionine (SAM) to carboxy-S-adenosyl-L-methionine (Cx-SAM). The protein is Carboxy-S-adenosyl-L-methionine synthase of Pseudomonas putida (strain ATCC 700007 / DSM 6899 / JCM 31910 / BCRC 17059 / LMG 24140 / F1).